A 676-amino-acid chain; its full sequence is Lutropin-choriogonadotropic hormone receptor (676 aa).

A signal peptide spans 1-29; that stretch reads MKQPLLALQLLKLLLLLLLPLPPLPRALR. Topologically, residues 30 to 340 are extracellular; it reads EARCCPEPCN…EDIMGYDFLR (311 aa). The N-linked (GlcNAc...) asparagine glycan is linked to N103. LRR repeat units lie at residues 126-151, 153-175, 176-200, 201-224, and 225-248; these read LPRLKYLSICNTGIRKFPDVTKIFSS, TNFILEICDNLHITTIPGNAFQG, MNNESITLKLYGNGFEEVQSHAFNG, TTVISLVLKENVHLERIHNGAFRG, and ATGPSILDISSTKLQALPSHGLES. N-linked (GlcNAc...) asparagine glycosylation is found at N178 and N199. Y308 carries the post-translational modification Sulfotyrosine. Residues 341–362 traverse the membrane as a helical segment; it reads VLIWLINILAIMGNMTVLFVLL. At 363–372 the chain is on the cytoplasmic side; the sequence is TSRYKLTVPR. A helical membrane pass occupies residues 373–393; it reads FLMCNLSFADFCMGLYLLLIA. Topologically, residues 394-416 are extracellular; the sequence is SVDSQTKGQYYNHAIDWQTGSGC. A disulfide bridge connects residues C416 and C491. Residues 417 to 439 form a helical membrane-spanning segment; it reads NTAGFFTVFASELSVYTLTVITL. Over 440–459 the chain is Cytoplasmic; it reads ERWHTITYAIHLDQKLRLRH. The chain crosses the membrane as a helical span at residues 460-482; it reads AILIMLGGWLFSSLIAMLPLVGV. Residues 483–502 are Extracellular-facing; the sequence is SNYMKVSICFPMDVETTLSQ. The helical transmembrane segment at 503-526 threads the bilayer; the sequence is IYILTILILNVVAFIIICACYIKI. At 527–547 the chain is on the cytoplasmic side; the sequence is YFAVRNPELMATNKDTKIAKK. The helical transmembrane segment at 548 to 571 threads the bilayer; it reads MAILIFTDFTCMAPISFFAISAAF. Topologically, residues 572 to 582 are extracellular; sequence KMPLITVTNSK. Residues 583-604 form a helical membrane-spanning segment; the sequence is VLLVLFYPINSCANPFLYAIFT. The Cytoplasmic portion of the chain corresponds to 605 to 676; sequence KTFRRDFFLL…LLDKTCYKEY (72 aa). 2 S-palmitoyl cysteine lipidation sites follow: C620 and C621.

This sequence belongs to the G-protein coupled receptor 1 family. FSH/LSH/TSH subfamily. Sulfated.

The protein resides in the cell membrane. In terms of biological role, receptor for lutropin-choriogonadotropic hormone. The activity of this receptor is mediated by G proteins which activate adenylate cyclase. The sequence is that of Lutropin-choriogonadotropic hormone receptor (LHCGR) from Callithrix jacchus (White-tufted-ear marmoset).